The sequence spans 336 residues: Fructose-1,6-bisphosphatase class 1 (336 aa).

Mg(2+) is bound by residues Glu92, Asp115, Leu117, and Asp118. Substrate contacts are provided by residues 118 to 121, Asn211, Tyr244, 262 to 264, and Lys274; these read DGSS and YLY. Glu280 contributes to the Mg(2+) binding site.

It belongs to the FBPase class 1 family. As to quaternary structure, homotetramer. Mg(2+) is required as a cofactor.

It localises to the cytoplasm. It catalyses the reaction beta-D-fructose 1,6-bisphosphate + H2O = beta-D-fructose 6-phosphate + phosphate. The protein operates within carbohydrate biosynthesis; gluconeogenesis. The protein is Fructose-1,6-bisphosphatase class 1 of Aliivibrio fischeri (strain ATCC 700601 / ES114) (Vibrio fischeri).